A 179-amino-acid polypeptide reads, in one-letter code: Large ribosomal subunit protein uL6 (179 aa).

This sequence belongs to the universal ribosomal protein uL6 family. In terms of assembly, part of the 50S ribosomal subunit.

In terms of biological role, this protein binds to the 23S rRNA, and is important in its secondary structure. It is located near the subunit interface in the base of the L7/L12 stalk, and near the tRNA binding site of the peptidyltransferase center. The chain is Large ribosomal subunit protein uL6 from Buchnera aphidicola subsp. Baizongia pistaciae (strain Bp).